The sequence spans 147 residues: Globin (147 aa).

Residues 1–147 (GLDGAQKTAL…LLTMLIKAHV (147 aa)) enclose the Globin domain. Residues His66 and His98 each coordinate heme b.

It belongs to the globin family. In terms of assembly, homodimer.

The protein localises to the cytoplasm. The sequence is that of Globin from Busycotypus canaliculatus (Channeled whelk).